We begin with the raw amino-acid sequence, 396 residues long: Tryptophan synthase beta chain (396 aa).

The residue at position 88 (K88) is an N6-(pyridoxal phosphate)lysine.

This sequence belongs to the TrpB family. In terms of assembly, tetramer of two alpha and two beta chains. Pyridoxal 5'-phosphate serves as cofactor.

It carries out the reaction (1S,2R)-1-C-(indol-3-yl)glycerol 3-phosphate + L-serine = D-glyceraldehyde 3-phosphate + L-tryptophan + H2O. It participates in amino-acid biosynthesis; L-tryptophan biosynthesis; L-tryptophan from chorismate: step 5/5. Functionally, the beta subunit is responsible for the synthesis of L-tryptophan from indole and L-serine. This is Tryptophan synthase beta chain from Shewanella baltica (strain OS155 / ATCC BAA-1091).